The sequence spans 195 residues: Meiotically up-regulated gene 84 protein (195 aa).

Residues 1–84 are Cytoplasmic-facing; sequence MTLTHHSTFI…IMVKVPTYEY (84 aa). Residues 85-105 form a helical membrane-spanning segment; sequence YGFVMYLVSMLGFGVYIVWAL. Residues 106–122 lie on the Lumenal side of the membrane; the sequence is TPAPVLKFFEIHYYLSR. The chain crosses the membrane as a helical span at residues 123 to 143; it reads WWALAIPTWLFVLVIYIHVVL. The Cytoplasmic portion of the chain corresponds to 144-195; it reads NAYNTEVLTKPFSSLECIVDQYALVGEEDGAAHGRVVDLRLCDVNKQQLEET.

The protein resides in the endoplasmic reticulum membrane. Has a role in meiosis. This is Meiotically up-regulated gene 84 protein (mug84) from Schizosaccharomyces pombe (strain 972 / ATCC 24843) (Fission yeast).